A 167-amino-acid polypeptide reads, in one-letter code: Putative NADH-quinone oxidoreductase subunit B 2 (167 aa).

Belongs to the complex I 20 kDa subunit family. In terms of assembly, NDH-1 is composed of 14 different subunits. Subunits NuoB, C, D, E, F, and G constitute the peripheral sector of the complex.

Its subcellular location is the cell inner membrane. It catalyses the reaction a quinone + NADH + 5 H(+)(in) = a quinol + NAD(+) + 4 H(+)(out). NDH-1 shuttles electrons from NADH, via FMN and iron-sulfur (Fe-S) centers, to quinones in the respiratory chain. Couples the redox reaction to proton translocation (for every two electrons transferred, four hydrogen ions are translocated across the cytoplasmic membrane), and thus conserves the redox energy in a proton gradient. The sequence is that of Putative NADH-quinone oxidoreductase subunit B 2 from Burkholderia pseudomallei (strain 1710b).